The chain runs to 65 residues: Large ribosomal subunit protein bL35 (65 aa).

It belongs to the bacterial ribosomal protein bL35 family.

This is Large ribosomal subunit protein bL35 from Edwardsiella ictaluri (strain 93-146).